We begin with the raw amino-acid sequence, 156 residues long: Ecotin (156 aa).

Residues 1–19 form the signal peptide; sequence MKALLIAAGVAALSSTAMA. The cysteines at positions 65 and 102 are disulfide-linked.

Belongs to the protease inhibitor I11 (ecotin) family. Homodimer.

The protein resides in the periplasm. In terms of biological role, general inhibitor of family S1 serine proteases. This chain is Ecotin, found in Pseudomonas aeruginosa (strain ATCC 15692 / DSM 22644 / CIP 104116 / JCM 14847 / LMG 12228 / 1C / PRS 101 / PAO1).